The sequence spans 498 residues: Aminotransferase swnA (498 aa).

Belongs to the class-I pyridoxal-phosphate-dependent aminotransferase family. The cofactor is pyridoxal 5'-phosphate.

It functions in the pathway mycotoxin biosynthesis. Functionally, aminotransferase; part of the gene cluster that mediates the biosynthesis of swainsonine (SW), a cytotoxic fungal alkaloid and a potential cancer therapy drug. Swainsonine production occurs via a multibranched pathway and is dispensable for fungal colonization of plants and infection of insect hosts. The first step of swainsonine biosynthesis is the production of the precursor pipecolic acid (PA) via conversion of L-lysine (Lys) to 1-piperideine-6-carboxylate (P6C) by the aminotransferase swnA, the latter being further reduced to PA by the reductase swnR. PA can be converted from lysine by both the SW biosynthetic cluster and the unclustered genes such as lysine cyclodeaminase. The PKS-NRPS hybrid synthetase swnK uptakes and condensates PA and malonyl-CoA with and without skipping of the ketoreductase (KR) domain in order to produce 3 intermediates, 1-oxoindolizidine, (1S)-1-hydroxyindolizin, and (1R)-1-hydroxyindolizine; with the transisomer (1S)-1-hydroxyindolizin being predominant. The terminal thioester reductase (TE) domain of swnK is involved in reduction of the thioester bond to release the intermediate aldehydes. The oxidoreductase swnN could contribute to the reduction of 1-oxoindolizidine to (1S)-1-hydroxyindolizin and (1R)-1-hydroxyindolizine, contributing to the major route of SW production. The dioxygenase swnH2 would be responsible for the oxidization of (1R)-1-hydroxyindolizine into (1R,2S)-1,2-dihydroxyindolizine and of (1S)-1-hydroxyindolizin to yield both (1R,2S)-1,2-dihydroxyindolizine and (1S,2S)-1,2-dihydroxyindolizine. The dioxygenase swnH1 then performs the conversion of the 1,2-dihydroxyindolizine epimers to SW. This is Aminotransferase swnA from Metarhizium robertsii (strain ARSEF 23 / ATCC MYA-3075) (Metarhizium anisopliae (strain ARSEF 23)).